The sequence spans 417 residues: Gamma-glutamyl phosphate reductase (417 aa).

The protein belongs to the gamma-glutamyl phosphate reductase family.

The protein resides in the cytoplasm. The enzyme catalyses L-glutamate 5-semialdehyde + phosphate + NADP(+) = L-glutamyl 5-phosphate + NADPH + H(+). It functions in the pathway amino-acid biosynthesis; L-proline biosynthesis; L-glutamate 5-semialdehyde from L-glutamate: step 2/2. In terms of biological role, catalyzes the NADPH-dependent reduction of L-glutamate 5-phosphate into L-glutamate 5-semialdehyde and phosphate. The product spontaneously undergoes cyclization to form 1-pyrroline-5-carboxylate. This Meiothermus ruber protein is Gamma-glutamyl phosphate reductase.